The primary structure comprises 196 residues: Transmembrane protein 126A (196 aa).

Topologically, residues methionine 1–glutamate 34 are mitochondrial matrix. A helical membrane pass occupies residues tyrosine 35–phenylalanine 55. Residues arginine 56 to arginine 57 lie on the Mitochondrial intermembrane side of the membrane. Residues isoleucine 58 to leucine 78 traverse the membrane as a helical segment. At threonine 79 to arginine 106 the chain is on the mitochondrial matrix side. Residues glycine 107–asparagine 127 traverse the membrane as a helical segment. Over glycine 128–lysine 159 the chain is Mitochondrial intermembrane. Residues methionine 160–serine 176 form a helical membrane-spanning segment. At arginine 177–glutamine 196 the chain is on the mitochondrial matrix side.

This sequence belongs to the TMEM126 family. Interacts with OXA1L; promoting cotranslational quality control in mitochondria.

It localises to the mitochondrion inner membrane. Protein required for the cotranslational protein quality control in the inner membrane of the mitochondria. Associates with newly synthesized polypeptides and may act as a chaperone that cooperates with OXA1L for the insertion of newly synthesized mitochondrial proteins into the inner membrane. Required for the assembly of the ND4 module of mitochondrial complex I. The chain is Transmembrane protein 126A (Tmem126a) from Rattus norvegicus (Rat).